The following is a 314-amino-acid chain: ATP synthase gamma chain (314 aa).

This sequence belongs to the ATPase gamma chain family. F-type ATPases have 2 components, CF(1) - the catalytic core - and CF(0) - the membrane proton channel. CF(1) has five subunits: alpha(3), beta(3), gamma(1), delta(1), epsilon(1). CF(0) has three main subunits: a, b and c.

The protein resides in the cell membrane. Functionally, produces ATP from ADP in the presence of a proton gradient across the membrane. The gamma chain is believed to be important in regulating ATPase activity and the flow of protons through the CF(0) complex. The sequence is that of ATP synthase gamma chain from Lactiplantibacillus plantarum (strain ATCC BAA-793 / NCIMB 8826 / WCFS1) (Lactobacillus plantarum).